Consider the following 262-residue polypeptide: Nurim (262 aa).

At 1-4 (MAPA) the chain is on the nuclear side. A helical transmembrane segment spans residues 5–28 (LLLVPAALASFILAFGTGVEFVRF). Over 29 to 58 (TSLRPLLGGIPESGGPDARQGWLAALQDQS) the chain is Perinuclear space. Residues 59-80 (ILVPLAWDLGLLLLFVGQHSLM) traverse the membrane as a helical segment. The Nuclear portion of the chain corresponds to 81-97 (ATETVKAWMSRYFGVLQ). Residues 98–114 (RSLYVACTALALQLVMR) form a helical membrane-spanning segment. Residues 115 to 133 (YWEPVPRGPVLWEAQAEPW) are Perinuclear space-facing. The helical transmembrane segment at 134 to 164 (ATWVPLLCFVLHVISWLLIFSILLVFDYAEL) threads the bilayer. Over 165–191 (MGLKQVYYHVLGLGEPLALKSPRALRL) the chain is Nuclear. A helical transmembrane segment spans residues 192–210 (FSHLRHPVCVELLTVLWVV). Over 211 to 216 (PTLGTD) the chain is Perinuclear space. Residues 217-234 (RLLLALLLTLYLGLAHGL) form a helical membrane-spanning segment. Over 235-262 (DQQDLRYLRAQLQRKLHLLSRPQDGEAE) the chain is Nuclear.

It belongs to the nurim family.

The protein localises to the nucleus inner membrane. This Sus scrofa (Pig) protein is Nurim (NRM).